We begin with the raw amino-acid sequence, 282 residues long: Heme oxygenase 1, chloroplastic (282 aa).

The N-terminal 56 residues, 1 to 56 (MASATVVSQIQSLYIIKPRLSPPPPPHRQFRSIYFPTTRLLQQHRFRQMKSVVIVP), are a transit peptide targeting the chloroplast. Position 86 (histidine 86) interacts with heme b.

Belongs to the heme oxygenase family. In terms of tissue distribution, highly expressed in root nodules and, to a lower extent, in leaves, shoots, roots, flowers and pods (at protein level).

The protein resides in the plastid. Its subcellular location is the chloroplast. The catalysed reaction is heme b + 3 reduced [NADPH--hemoprotein reductase] + 3 O2 = biliverdin IXalpha + CO + Fe(2+) + 3 oxidized [NADPH--hemoprotein reductase] + 3 H2O + H(+). In terms of biological role, key enzyme in the synthesis of the chromophore of the phytochrome family of plant photoreceptors. Catalyzes the opening of the heme ring to form the open-chain tetrapyrrole biliverdin IX with the release of iron and carbon monoxide (CO). Produces specifically the biliverdin IX-alpha isomer. Can form complex with heme, is ferredoxin-dependent and its activity is increased in the presence of ascorbate. May affect the plastid-to-nucleus signaling pathway by perturbing tetrapyrrole synthesis. The plastid-to-nucleus signal plays an important role in the coordinated expression of both nuclear- and chloroplast-localized genes that encode photosynthesis-related proteins. Required for efficient symbiotic nitrogen fixation (SNF) in root nodules. Responsible for heme catabolism in uninfected nodule interstitial cells (UC), preventing superoxide production under stressful conditions (e.g. nitrate exposure and darkness) and catalyzing biliverdin (BV) production in senescing green nodules. In Lotus japonicus (Lotus corniculatus var. japonicus), this protein is Heme oxygenase 1, chloroplastic.